A 273-amino-acid polypeptide reads, in one-letter code: Undecaprenyl-diphosphatase (273 aa).

8 helical membrane passes run 13–35, 45–65, 90–110, 116–136, 157–177, 190–210, 222–242, and 252–272; these read LGVV…IIVG, ANTF…VMFW, LSLI…LIFH, LFNP…LIAA, AFVI…RSGA, YAAS…ATVL, GDVP…LIAI, and ISFI…YVVF.

This sequence belongs to the UppP family.

Its subcellular location is the cell inner membrane. The enzyme catalyses di-trans,octa-cis-undecaprenyl diphosphate + H2O = di-trans,octa-cis-undecaprenyl phosphate + phosphate + H(+). Its function is as follows. Catalyzes the dephosphorylation of undecaprenyl diphosphate (UPP). Confers resistance to bacitracin. This Klebsiella pneumoniae subsp. pneumoniae (strain ATCC 700721 / MGH 78578) protein is Undecaprenyl-diphosphatase.